The following is a 226-amino-acid chain: Clarin-3 (226 aa).

The chain crosses the membrane as a helical span at residues Leu-8 to Leu-28. An N-linked (GlcNAc...) asparagine glycan is attached at Asn-83. 3 helical membrane-spanning segments follow: residues Val-92–Phe-112, Val-129–Ala-149, and Phe-181–Tyr-201.

It belongs to the clarin family.

It is found in the membrane. The polypeptide is Clarin-3 (CLRN3) (Homo sapiens (Human)).